A 389-amino-acid chain; its full sequence is tRNA-specific 2-thiouridylase MnmA (389 aa).

ATP is bound by residues 30-37 (GLSGGVDS) and leucine 56. The Nucleophile role is filled by cysteine 117. The cysteines at positions 117 and 216 are disulfide-linked. ATP is bound at residue glycine 142. The tract at residues 166-168 (KDQ) is interaction with tRNA. Catalysis depends on cysteine 216, which acts as the Cysteine persulfide intermediate. Residues 321–322 (RY) are interaction with tRNA.

It belongs to the MnmA/TRMU family.

Its subcellular location is the cytoplasm. It catalyses the reaction S-sulfanyl-L-cysteinyl-[protein] + uridine(34) in tRNA + AH2 + ATP = 2-thiouridine(34) in tRNA + L-cysteinyl-[protein] + A + AMP + diphosphate + H(+). In terms of biological role, catalyzes the 2-thiolation of uridine at the wobble position (U34) of tRNA, leading to the formation of s(2)U34. The chain is tRNA-specific 2-thiouridylase MnmA from Synechococcus sp. (strain CC9902).